The primary structure comprises 96 residues: 2Fe-2S ferredoxin-5 (96 aa).

Residues 2-96 (PKVIVANINA…GKGDVVIYLP (95 aa)) form the 2Fe-2S ferredoxin-type domain. [2Fe-2S] cluster-binding residues include C36, C42, C45, and C81.

This sequence belongs to the adrenodoxin/putidaredoxin family. It depends on [2Fe-2S] cluster as a cofactor.

In terms of biological role, may be involved in the assembly of iron-sulfur clusters (Isc-Fd). The chain is 2Fe-2S ferredoxin-5 (fdx5) from Aquifex aeolicus (strain VF5).